A 541-amino-acid chain; its full sequence is DNA ligase 1 (541 aa).

Position 234 (E234) interacts with ATP. The N6-AMP-lysine intermediate role is filled by K236. R241, R256, E286, F325, R398, and K404 together coordinate ATP.

It belongs to the ATP-dependent DNA ligase family. It depends on Mg(2+) as a cofactor.

It carries out the reaction ATP + (deoxyribonucleotide)n-3'-hydroxyl + 5'-phospho-(deoxyribonucleotide)m = (deoxyribonucleotide)n+m + AMP + diphosphate.. DNA ligase that seals nicks in double-stranded DNA during DNA replication, DNA recombination and DNA repair. The protein is DNA ligase 1 of Korarchaeum cryptofilum (strain OPF8).